A 498-amino-acid polypeptide reads, in one-letter code: Glycerol kinase (498 aa).

Thr-11 contacts ADP. Residues Thr-11, Ser-12, and Ser-13 each contribute to the ATP site. Thr-11 provides a ligand contact to sn-glycerol 3-phosphate. Arg-15 serves as a coordination point for ADP. Sn-glycerol 3-phosphate is bound by residues Arg-81, Glu-82, Tyr-133, and Asp-242. Glycerol contacts are provided by Arg-81, Glu-82, Tyr-133, Asp-242, and Gln-243. ADP-binding residues include Thr-264 and Gly-307. ATP-binding residues include Thr-264, Gly-307, Gln-311, and Gly-408. Gly-408 and Asn-412 together coordinate ADP.

The protein belongs to the FGGY kinase family.

It carries out the reaction glycerol + ATP = sn-glycerol 3-phosphate + ADP + H(+). The protein operates within polyol metabolism; glycerol degradation via glycerol kinase pathway; sn-glycerol 3-phosphate from glycerol: step 1/1. Its activity is regulated as follows. Inhibited by fructose 1,6-bisphosphate (FBP). Its function is as follows. Key enzyme in the regulation of glycerol uptake and metabolism. Catalyzes the phosphorylation of glycerol to yield sn-glycerol 3-phosphate. The chain is Glycerol kinase from Ralstonia pickettii (strain 12J).